A 72-amino-acid polypeptide reads, in one-letter code: Putative membrane protein insertion efficiency factor (72 aa).

Belongs to the UPF0161 family.

It localises to the cell inner membrane. Functionally, could be involved in insertion of integral membrane proteins into the membrane. In Trichodesmium erythraeum (strain IMS101), this protein is Putative membrane protein insertion efficiency factor.